We begin with the raw amino-acid sequence, 311 residues long: tRNA-cytidine(32) 2-sulfurtransferase (311 aa).

The PP-loop motif signature appears at 47–52; it reads SGGKDS. [4Fe-4S] cluster is bound by residues Cys122, Cys125, and Cys213.

Belongs to the TtcA family. Homodimer. The cofactor is Mg(2+). [4Fe-4S] cluster is required as a cofactor.

It is found in the cytoplasm. The catalysed reaction is cytidine(32) in tRNA + S-sulfanyl-L-cysteinyl-[cysteine desulfurase] + AH2 + ATP = 2-thiocytidine(32) in tRNA + L-cysteinyl-[cysteine desulfurase] + A + AMP + diphosphate + H(+). It functions in the pathway tRNA modification. Its function is as follows. Catalyzes the ATP-dependent 2-thiolation of cytidine in position 32 of tRNA, to form 2-thiocytidine (s(2)C32). The sulfur atoms are provided by the cysteine/cysteine desulfurase (IscS) system. The sequence is that of tRNA-cytidine(32) 2-sulfurtransferase from Salmonella arizonae (strain ATCC BAA-731 / CDC346-86 / RSK2980).